The chain runs to 66 residues: Large ribosomal subunit protein bL33c (66 aa).

Belongs to the bacterial ribosomal protein bL33 family.

Its subcellular location is the plastid. It is found in the chloroplast. This Chloranthus spicatus (Chulantree) protein is Large ribosomal subunit protein bL33c.